The primary structure comprises 953 residues: Glutamate receptor 3.5 (953 aa).

The N-terminal stretch at 1-29 (MGFFVMIRDVSMGFMLLCISALWVLPIQG) is a signal peptide. Over 30 to 606 (AGRESFSRNS…SPWSFLKPFT (577 aa)) the chain is Extracellular. N-linked (GlcNAc...) asparagine glycans are attached at residues Asn38, Asn95, Asn223, Asn371, Asn397, Asn436, Asn454, and Asn569. Residues 607–627 (IEMWAVTGALFLFVGAVIWIL) form a helical membrane-spanning segment. At 628–636 (EHRFNEEFR) the chain is on the cytoplasmic side. A helical transmembrane segment spans residues 637–657 (GPPRRQIITVFWFSFSTMFFS). The Cytoplasmic portion of the chain corresponds to 658-668 (HRENTVSTLGR). The helical transmembrane segment at 669 to 689 (FVLLVWLFVVLIINSSYTASL) threads the bilayer. The Extracellular portion of the chain corresponds to 690–850 (TSILTVQQLT…TENYQISVQS (161 aa)). A helical membrane pass occupies residues 851 to 871 (FWGLFLICGVVWFIALTLFCW). Over 872–953 (KVFWQYQRLR…SQSKDHETPQ (82 aa)) the chain is Cytoplasmic. Residues 928–953 (EKSSKKLKDGQSSAENSQSKDHETPQ) form a disordered region.

It belongs to the glutamate-gated ion channel (TC 1.A.10.1) family. As to quaternary structure, may form heteromers. In terms of tissue distribution, expressed predominantly in roots. Also detected in shoots.

The protein resides in the membrane. Its function is as follows. Glutamate-gated receptor that probably acts as a non-selective cation channel. May be involved in light-signal transduction and calcium homeostasis via the regulation of calcium influx into cells. This Arabidopsis thaliana (Mouse-ear cress) protein is Glutamate receptor 3.5 (GLR3.5).